A 120-amino-acid chain; its full sequence is Large ribosomal subunit protein uL18 (120 aa).

The disordered stretch occupies residues 1 to 22 (MKTTRKESLKRRHRRIRRKVSG). Basic residues predominate over residues 8–20 (SLKRRHRRIRRKV).

Belongs to the universal ribosomal protein uL18 family. Part of the 50S ribosomal subunit; part of the 5S rRNA/L5/L18/L25 subcomplex. Contacts the 5S and 23S rRNAs.

In terms of biological role, this is one of the proteins that bind and probably mediate the attachment of the 5S RNA into the large ribosomal subunit, where it forms part of the central protuberance. The polypeptide is Large ribosomal subunit protein uL18 (Crocosphaera subtropica (strain ATCC 51142 / BH68) (Cyanothece sp. (strain ATCC 51142))).